A 109-amino-acid polypeptide reads, in one-letter code: Phosphoribosyl-ATP pyrophosphatase (109 aa).

Belongs to the PRA-PH family.

The protein resides in the cytoplasm. It carries out the reaction 1-(5-phospho-beta-D-ribosyl)-ATP + H2O = 1-(5-phospho-beta-D-ribosyl)-5'-AMP + diphosphate + H(+). It participates in amino-acid biosynthesis; L-histidine biosynthesis; L-histidine from 5-phospho-alpha-D-ribose 1-diphosphate: step 2/9. The sequence is that of Phosphoribosyl-ATP pyrophosphatase from Alkalilimnicola ehrlichii (strain ATCC BAA-1101 / DSM 17681 / MLHE-1).